We begin with the raw amino-acid sequence, 301 residues long: Porphobilinogen deaminase (301 aa).

Cys-242 bears the S-(dipyrrolylmethanemethyl)cysteine mark.

Belongs to the HMBS family. As to quaternary structure, monomer. Requires dipyrromethane as cofactor.

It carries out the reaction 4 porphobilinogen + H2O = hydroxymethylbilane + 4 NH4(+). It functions in the pathway porphyrin-containing compound metabolism; protoporphyrin-IX biosynthesis; coproporphyrinogen-III from 5-aminolevulinate: step 2/4. In terms of biological role, tetrapolymerization of the monopyrrole PBG into the hydroxymethylbilane pre-uroporphyrinogen in several discrete steps. The sequence is that of Porphobilinogen deaminase from Rickettsia canadensis (strain McKiel).